A 1400-amino-acid chain; its full sequence is MNQEVMNLFNPQAPAQTFDSIRISIASPEKILSWSYGEIKKPETINYRTFKPERDGLFCARIFGPIKDYECLCGKYKRMKYKGIICEKCGVEVTLSRVRRERMGHIELAAPVAHIWFLKSLPSRIGTLLDMTLKDIERVLYFENYIVTEPGLTSLKEHQLLSEEEYMIAVDEFGEDQFTALIGAEAIYELLASMELEKIAADLRVDLAETTSDLKQKKLMKRLKIVENFLESGNRPEWMIMKIVPVIPPDLRPLVPLDGGRFATSDLNDLYRRVINRNNRLKRLIELRAPGIIIRNEKRMLQEAVDALFDNGRRGRVITGANKRPLKSLSDMLKGKQGRFRQNLLGKRVDYSGRSVIVTGPELKLHQCGLPKKMALELFKPFIYARLDAKGYSSTVKQAKKLVEKERPEVWDILDEVIREHPVLLNRAPTLHRLGIQAFEPTLIEGKAIQLHPLVCTAFNADFDGDQMAVHVPLSLEAQLEARVLMMSTNNILHPANGAPIIVPSQDMVLGLYYLSIVAEKEPGEGMIFADMGELQHALENKVVTLHTKIKGRFKTVDAEGNPVSKIYDTTPGRMIMGELLPKNVNVPFDICNQEMTKKNISKMIDHVYRHCGQKETVIFCDRIMQLGFAHACRAGISFGKDDMVIPESKAKIVAETEALTTEYEQQYNDGLITQGEKYNKVVDAWGKATDKITEEMMARLKAVEFDPVTGRQKQMNSVYMMSHSGARGSVNQMRQLGGMRGLMAKPSGEIIETPIISNFKEGLTVNEYFNSTHGARKGLADTALKTANSGYLTRRLVDVAQDAIISEVDCGAEIGLTMQPIVDAGQIVASIGQRVLGRTALDPILHPVTGEVIVEAGRMIEEKDVEIIEKAGIQSIRIRSALTCETRDGVCAKCYGRDLARGTPVNQGEAVGVIAAQSIGEPGTQLTMRTFHLGGTAQVVDSSYLEASYEGTVKLRNRNVVRNSDGNLVVMGRNMAVLILDATGKERAVHRVTYGSRLFVDEGDTVKRGQRIAEWDPYTRPIMTEVEGYIEFEDLVDGLSVSETADESTGITKRVVIDWRSTPRGSDLKPAMVIKDKAGKILKLSKGGDARFLLSVESILSVEPGAHVKAGDVIARLPMESAKTKDITGGLPRVAELFEARRPKDHAIIAEIDGTVRFGRDYKNKRRIIIEPNDDTIEPVEYLIPKGKPFHLQDGDVIEKGEYILDGNPAPHDILAIKGVEALASYLVNEIQEVYRLQGVLINDKHIEVIVRQMLQKVEITESGDTGYIPGDHVDRIELEEINERLIEEGKKPGSGNPVLLGITKASLQTPSFISAASFQETTRVLTEAAVAGKMDTLQGLKENVIVGRLIPAGTGGMTNQIRRIATARDELIIDERRKTSGSAEANAMLVDMTNNAAE.

Zn(2+) is bound by residues cysteine 71, cysteine 73, cysteine 86, and cysteine 89. Residues aspartate 462, aspartate 464, and aspartate 466 each contribute to the Mg(2+) site. Residues cysteine 811, cysteine 885, cysteine 892, and cysteine 895 each coordinate Zn(2+).

Belongs to the RNA polymerase beta' chain family. The RNAP catalytic core consists of 2 alpha, 1 beta, 1 beta' and 1 omega subunit. When a sigma factor is associated with the core the holoenzyme is formed, which can initiate transcription. Requires Mg(2+) as cofactor. It depends on Zn(2+) as a cofactor.

The catalysed reaction is RNA(n) + a ribonucleoside 5'-triphosphate = RNA(n+1) + diphosphate. Its function is as follows. DNA-dependent RNA polymerase catalyzes the transcription of DNA into RNA using the four ribonucleoside triphosphates as substrates. This chain is DNA-directed RNA polymerase subunit beta', found in Brucella suis (strain ATCC 23445 / NCTC 10510).